A 70-amino-acid polypeptide reads, in one-letter code: DNA-directed RNA polymerase subunit omega (70 aa).

Belongs to the RNA polymerase subunit omega family. The RNAP catalytic core consists of 2 alpha, 1 beta, 1 beta' and 1 omega subunit. When a sigma factor is associated with the core the holoenzyme is formed, which can initiate transcription.

It carries out the reaction RNA(n) + a ribonucleoside 5'-triphosphate = RNA(n+1) + diphosphate. Its function is as follows. Promotes RNA polymerase assembly. Latches the N- and C-terminal regions of the beta' subunit thereby facilitating its interaction with the beta and alpha subunits. This chain is DNA-directed RNA polymerase subunit omega, found in Bacillus cereus (strain G9842).